The sequence spans 237 residues: MRPSRRAPDEMRAVSLERGVVKYAEGSCLVKFGDTHVLVTATLEDRLPPWLKGQGRGWITAEYGMLPRATLERTRREASAGKQTGRTVEIQRLIGRSLRTAIDLEALGERQITVDCDVLQADGGTRTASITGAWVALADCIRWMKARNMIKTEVLRTNVAAVSCGIYNGTPVLDLDYAEDSEAETDANFVMTGDGRIIEVQGTAEKTPFSEAEFLALMALARKGVGRLVDLQKMAVA.

Residues Arg86 and 124 to 126 contribute to the phosphate site; that span reads GTR.

Belongs to the RNase PH family. Homohexameric ring arranged as a trimer of dimers.

The catalysed reaction is tRNA(n+1) + phosphate = tRNA(n) + a ribonucleoside 5'-diphosphate. In terms of biological role, phosphorolytic 3'-5' exoribonuclease that plays an important role in tRNA 3'-end maturation. Removes nucleotide residues following the 3'-CCA terminus of tRNAs; can also add nucleotides to the ends of RNA molecules by using nucleoside diphosphates as substrates, but this may not be physiologically important. Probably plays a role in initiation of 16S rRNA degradation (leading to ribosome degradation) during starvation. The polypeptide is Ribonuclease PH (Bradyrhizobium sp. (strain ORS 278)).